The sequence spans 511 residues: UDP-N-acetylhexosamine pyrophosphorylase-like protein 1 (511 aa).

A compositionally biased stretch (basic and acidic residues) spans Met-1–Glu-19. Residues Met-1–Gln-22 form a disordered region. The Substrate binding signature appears at Leu-117–Gly-120. UTP is bound by residues Leu-117–Gly-120, Lys-131, Gln-205, and Gly-231. Asn-232 lines the substrate pocket. Position 262 (Asp-262) interacts with UTP. The short motif at Glu-312–Tyr-313 is the Substrate binding element. Lys-386 provides a ligand contact to UTP. Residue Lys-416 participates in substrate binding.

Belongs to the UDPGP type 1 family.

This is UDP-N-acetylhexosamine pyrophosphorylase-like protein 1 (uap1l1) from Xenopus tropicalis (Western clawed frog).